The primary structure comprises 88 residues: Small ribosomal subunit protein uS15 (88 aa).

It belongs to the universal ribosomal protein uS15 family. Part of the 30S ribosomal subunit. Forms a bridge to the 50S subunit in the 70S ribosome, contacting the 23S rRNA.

Its function is as follows. One of the primary rRNA binding proteins, it binds directly to 16S rRNA where it helps nucleate assembly of the platform of the 30S subunit by binding and bridging several RNA helices of the 16S rRNA. In terms of biological role, forms an intersubunit bridge (bridge B4) with the 23S rRNA of the 50S subunit in the ribosome. In Mycoplasma mobile (strain ATCC 43663 / 163K / NCTC 11711) (Mesomycoplasma mobile), this protein is Small ribosomal subunit protein uS15.